The following is a 304-amino-acid chain: N-acetylglucosaminyl-phosphatidylinositol de-N-acetylase (304 aa).

Residues 1 to 20 lie on the Lumenal side of the membrane; the sequence is MKMLRRTKVNFSKLLYKITK. The chain crosses the membrane as a helical span at residues 21–38; that stretch reads LAIVLTILYIYFTPKIVS. The Cytoplasmic portion of the chain corresponds to 39 to 304; the sequence is RNNASLQHIF…FVNEFDVYTY (266 aa).

The protein belongs to the PIGL family.

It localises to the endoplasmic reticulum membrane. It carries out the reaction a 6-(N-acetyl-alpha-D-glucosaminyl)-1-(1,2-diacyl-sn-glycero-3-phospho)-1D-myo-inositol + H2O = a 6-(alpha-D-glucosaminyl)-1-(1,2-diacyl-sn-glycero-3-phospho)-1D-myo-inositol + acetate. It participates in glycolipid biosynthesis; glycosylphosphatidylinositol-anchor biosynthesis. Involved in the second step of GPI biosynthesis. De-N-acetylation of N-acetylglucosaminyl-phosphatidylinositol. In Saccharomyces cerevisiae (strain ATCC 204508 / S288c) (Baker's yeast), this protein is N-acetylglucosaminyl-phosphatidylinositol de-N-acetylase (GPI12).